The following is a 523-amino-acid chain: Peptidyl-prolyl cis-trans isomerase 4 (523 aa).

In terms of domain architecture, U-box spans 38–111; it reads KRLPINHCSL…GKFRCPVTFR (74 aa). A PPIase cyclophilin-type domain is found at 278–433; the sequence is KNAFVRLVTN…VSVVIMRAEV (156 aa).

Belongs to the cyclophilin-type PPIase family. PPIL2 subfamily. Interacts with mep-1. Exclusively in the larval body wall striated muscle cells.

The protein resides in the nucleus. The enzyme catalyses [protein]-peptidylproline (omega=180) = [protein]-peptidylproline (omega=0). It catalyses the reaction S-ubiquitinyl-[E2 ubiquitin-conjugating enzyme]-L-cysteine + [acceptor protein]-L-lysine = [E2 ubiquitin-conjugating enzyme]-L-cysteine + N(6)-ubiquitinyl-[acceptor protein]-L-lysine.. Its pathway is protein modification; protein ubiquitination. Functionally, may catalyze the cis-trans isomerization of proline imidic peptide bonds in oligopeptides thereby assisting the folding of proteins. May also function as a chaperone, playing a role in intracellular transport of proteins. May also have a protein ubiquitin ligase activity acting as an E3 ubiquitin protein ligase or as a ubiquitin-ubiquitin ligase promoting elongation of ubiquitin chains on proteins. Influences the hermaphrodite switch from spermatogenesis to oogenesis. Required for body wall muscle cell development. The sequence is that of Peptidyl-prolyl cis-trans isomerase 4 (cyn-4) from Caenorhabditis elegans.